Here is a 926-residue protein sequence, read N- to C-terminus: Thyroid peroxidase (926 aa).

A signal peptide spans 1-14 (MGARAVLGVTLAVA). Topologically, residues 19-844 (FFASILRRKD…TCVDAGRLPR (826 aa)) are extracellular. Asparagine 129 is a glycosylation site (N-linked (GlcNAc...) asparagine). A disulfide bridge connects residues cysteine 142 and cysteine 158. Aspartate 238 provides a ligand contact to heme b. Histidine 239 (proton acceptor) is an active-site residue. Aspartate 240 provides a ligand contact to Ca(2+). Cystine bridges form between cysteine 259/cysteine 269 and cysteine 263/cysteine 286. Asparagine 277 and asparagine 307 each carry an N-linked (GlcNAc...) asparagine glycan. Ca(2+) contacts are provided by threonine 321, phenylalanine 323, aspartate 325, and serine 327. Asparagine 342 carries N-linked (GlcNAc...) asparagine glycosylation. Residues glutamate 398 and histidine 493 each contribute to the heme b site. Intrachain disulfides connect cysteine 596-cysteine 653, cysteine 694-cysteine 719, cysteine 740-cysteine 780, cysteine 766-cysteine 792, cysteine 798-cysteine 812, cysteine 806-cysteine 821, and cysteine 823-cysteine 836. The Sushi domain occupies 738 to 793 (DACGFPDPVEDGGFLLCEERGQRVLVFSCRHGFRLRGPAQITCTPRGWDSPPPLCK). The EGF-like; calcium-binding domain occupies 794–837 (DINECEDETDPPCHASARCKNTKGGVLCECSDPLVLGEDGRTCV). A helical transmembrane segment spans residues 845-869 (ASVVSIALGAVLVCGLAGLAWTVVC). Residues 870–926 (RWTHADARPLLPVGEGEGDGKSPSLPLPGCGNRRDVGAAPALEVEQDLSCGSRGLCE) lie on the Cytoplasmic side of the membrane.

This sequence belongs to the peroxidase family. XPO subfamily. In terms of assembly, interacts with DUOX1, DUOX2 and CYBA. Ca(2+) is required as a cofactor. Heme b serves as cofactor. In terms of processing, heme is covalently bound through a H(2)O(2)-dependent autocatalytic process. Heme insertion is important for the delivery of protein at the cell surface. Post-translationally, cleaved in its N-terminal part. N-glycosylated; contains mannose and N-acetylglucosamine.

It is found in the membrane. It catalyses the reaction 2 iodide + H2O2 + 2 H(+) = diiodine + 2 H2O. It carries out the reaction [thyroglobulin]-L-tyrosine + iodide + H2O2 + H(+) = [thyroglobulin]-3-iodo-L-tyrosine + 2 H2O. The enzyme catalyses [thyroglobulin]-3-iodo-L-tyrosine + iodide + H2O2 + H(+) = [thyroglobulin]-3,5-diiodo-L-tyrosine + 2 H2O. The catalysed reaction is 2 [thyroglobulin]-3,5-diiodo-L-tyrosine + H2O2 = [thyroglobulin]-L-thyroxine + [thyroglobulin]-dehydroalanine + 2 H2O. It catalyses the reaction [thyroglobulin]-3-iodo-L-tyrosine + [thyroglobulin]-3,5-diiodo-L-tyrosine + H2O2 = [thyroglobulin]-3,3',5-triiodo-L-thyronine + [thyroglobulin]-dehydroalanine + 2 H2O. Its pathway is hormone biosynthesis; thyroid hormone biosynthesis. In terms of biological role, iodination and coupling of the hormonogenic tyrosines in thyroglobulin to yield the thyroid hormones T(3) and T(4). The chain is Thyroid peroxidase (TPO) from Sus scrofa (Pig).